The sequence spans 314 residues: Homoserine O-succinyltransferase (314 aa).

Catalysis depends on C142, which acts as the Acyl-thioester intermediate. Residues K163 and S192 each coordinate substrate. H235 (proton acceptor) is an active-site residue. E237 is a catalytic residue. Residue R249 coordinates substrate.

This sequence belongs to the MetA family.

Its subcellular location is the cytoplasm. The enzyme catalyses L-homoserine + succinyl-CoA = O-succinyl-L-homoserine + CoA. Its pathway is amino-acid biosynthesis; L-methionine biosynthesis via de novo pathway; O-succinyl-L-homoserine from L-homoserine: step 1/1. Transfers a succinyl group from succinyl-CoA to L-homoserine, forming succinyl-L-homoserine. In Shewanella pealeana (strain ATCC 700345 / ANG-SQ1), this protein is Homoserine O-succinyltransferase.